Consider the following 591-residue polypeptide: Aspartate--tRNA(Asp/Asn) ligase (591 aa).

An L-aspartate-binding site is contributed by Glu174. An aspartate region spans residues 198–201; sequence QLFK. Arg220 is a binding site for L-aspartate. Residues 220 to 222 and Gln229 contribute to the ATP site; that span reads RDE. Residue His450 participates in L-aspartate binding. Position 483 (Glu483) interacts with ATP. L-aspartate is bound at residue Arg490. 535–538 is an ATP binding site; that stretch reads GLDR.

This sequence belongs to the class-II aminoacyl-tRNA synthetase family. Type 1 subfamily. As to quaternary structure, homodimer.

The protein resides in the cytoplasm. The enzyme catalyses tRNA(Asx) + L-aspartate + ATP = L-aspartyl-tRNA(Asx) + AMP + diphosphate. Functionally, aspartyl-tRNA synthetase with relaxed tRNA specificity since it is able to aspartylate not only its cognate tRNA(Asp) but also tRNA(Asn). Reaction proceeds in two steps: L-aspartate is first activated by ATP to form Asp-AMP and then transferred to the acceptor end of tRNA(Asp/Asn). The protein is Aspartate--tRNA(Asp/Asn) ligase of Pseudomonas fluorescens (strain Pf0-1).